Here is a 1005-residue protein sequence, read N- to C-terminus: Translation initiation factor IF-2 (1005 aa).

2 disordered regions span residues 54-337 and 368-414; these read KYVP…RRPQ and PKPK…PTSV. Positions 58 to 73 are enriched in polar residues; the sequence is SPSTHSMPPTRPTSHS. Residues 75 to 86 are compositionally biased toward pro residues; sequence PLPPQPGKPQPK. The span at 146 to 157 shows a compositional bias: polar residues; the sequence is GSNSPSHSESTP. Composition is skewed to low complexity over residues 189-198 and 222-240; these read PSPAAMAGRA and VESA…PRAE. Residues 258–274 show a composition bias toward basic and acidic residues; sequence PRSETSEDGARRGEKLV. Over residues 392-401 the composition is skewed to basic residues; it reads GGRKLSRRDR. Positions 495–668 constitute a tr-type G domain; sequence RRPPVVTIMG…LLVSEVEDLY (174 aa). The segment at 504–511 is G1; it reads GHVDHGKT. A GTP-binding site is contributed by 504 to 511; sequence GHVDHGKT. The G2 stretch occupies residues 529 to 533; sequence GITQH. The G3 stretch occupies residues 554 to 557; the sequence is DTPG. Residues 554–558 and 608–611 contribute to the GTP site; these read DTPGH and NKID. The segment at 608 to 611 is G4; it reads NKID. A G5 region spans residues 644–646; that stretch reads SAI.

This sequence belongs to the TRAFAC class translation factor GTPase superfamily. Classic translation factor GTPase family. IF-2 subfamily.

It is found in the cytoplasm. Its function is as follows. One of the essential components for the initiation of protein synthesis. Protects formylmethionyl-tRNA from spontaneous hydrolysis and promotes its binding to the 30S ribosomal subunits. Also involved in the hydrolysis of GTP during the formation of the 70S ribosomal complex. The protein is Translation initiation factor IF-2 of Cyanothece sp. (strain PCC 7425 / ATCC 29141).